Here is an 819-residue protein sequence, read N- to C-terminus: DNA topoisomerase 4 subunit A (819 aa).

The 467-residue stretch at 30-496 (LPDIRDGLKP…QIIEIDTASL (467 aa)) folds into the Topo IIA-type catalytic domain. The active-site O-(5'-phospho-DNA)-tyrosine intermediate is the tyrosine 118.

It belongs to the type II topoisomerase GyrA/ParC subunit family. ParC type 2 subfamily. As to quaternary structure, heterotetramer composed of ParC and ParE.

The protein localises to the cell membrane. It catalyses the reaction ATP-dependent breakage, passage and rejoining of double-stranded DNA.. Its function is as follows. Topoisomerase IV is essential for chromosome segregation. It relaxes supercoiled DNA. Performs the decatenation events required during the replication of a circular DNA molecule. This Streptococcus pyogenes serotype M1 protein is DNA topoisomerase 4 subunit A.